We begin with the raw amino-acid sequence, 489 residues long: CDK5RAP3 protein homolog (489 aa).

The protein belongs to the CDK5RAP3 family.

Functionally, substrate adapter of E3 ligase complexes mediating ufmylation, the covalent attachment of the ubiquitin-like modifier UFM1 to substrate proteins, and which is involved in various processes, such as ribosome recycling and reticulophagy (also called ER-phagy). This Caenorhabditis elegans protein is CDK5RAP3 protein homolog.